Here is a 46-residue protein sequence, read N- to C-terminus: Esculentin-1 (46 aa).

C40 and C46 form a disulfide bridge.

Belongs to the frog skin active peptide (FSAP) family. Brevinin subfamily. As to expression, expressed by the skin glands.

Its subcellular location is the secreted. In terms of biological role, shows antibacterial activity against representative Gram-negative and Gram-positive bacterial species, and hemolytic activity. This chain is Esculentin-1, found in Pelophylax lessonae (Pool frog).